A 142-amino-acid polypeptide reads, in one-letter code: Deoxyuridine 5'-triphosphate nucleotidohydrolase (142 aa).

Residues 62 to 64, Asn75, and 79 to 81 each bind substrate; these read RSG and TID.

The protein belongs to the dUTPase family. Requires Mg(2+) as cofactor.

It catalyses the reaction dUTP + H2O = dUMP + diphosphate + H(+). The protein operates within pyrimidine metabolism; dUMP biosynthesis; dUMP from dCTP (dUTP route): step 2/2. This enzyme is involved in nucleotide metabolism: it produces dUMP, the immediate precursor of thymidine nucleotides and it decreases the intracellular concentration of dUTP so that uracil cannot be incorporated into DNA. The sequence is that of Deoxyuridine 5'-triphosphate nucleotidohydrolase from Clostridium novyi (strain NT).